Here is a 61-residue protein sequence, read N- to C-terminus: Large ribosomal subunit protein bL28 (61 aa).

The protein belongs to the bacterial ribosomal protein bL28 family.

The polypeptide is Large ribosomal subunit protein bL28 (Geobacillus thermodenitrificans (strain NG80-2)).